A 1368-amino-acid chain; its full sequence is NEELTLEEKAEICSELELQQKYADIASNIIGDLSSLPMVGKIVGTIAAAAMTVAHVGSGRLDIEQTLLGCSDLPFDQIKEILETRFNEVDRKLESHSAALEEITKLVDKSISAVEKTRKQMNKRFDEVMKSIQDAKVSPIVSKINNFAKYFDAEKERVRGLKLNDYILKLEEPNGILLHFKDVRTPKDDSLQSPLFSIIQERYAIPKTVDDELAFKVLYAILYGTQTYVSVMFFLLEQYSFLANHYYEKGDLEKYDEYFNNLNNVFLDFKSSLVGSGASNNEGLIDNVLQVLMTVKSNEFLGLGKNSLEEMLNEKINLFSKIKEEIEGKQRMTLSETPENFARISFEKDITTPIGDWRDSREVRYAVQYASETLFSKIGHWSDPVSVRAKACPTLRMPVDQTRRNVLVFRKFDNSKPQLVGEITPYQSNFIDIDRDLYNAASNPDSAVGFMEFKKLISNGANIRAVFNQGRTVFHAAAKSGNDKIMIELTFFSKYTDINQPDKKGYTPIHVAADSGNAGIVNLLIRSGISVNSKTYNFLQTPLHLAAQRGFVATFQRLMESPEININERDKDGFTPLHYAVRGGERILEAFINQAGIDVNVKSDKGLTPFHLAVIKNDWPVASTLLRSKKIDINAIDENNMTALHYAAILGFLETTKQLINLKEINANAVSSPGLLSALHYAILYKHDDVALFLLKSSKVNYNLKAFGDITPLHLAVMQGRKQVLSEMFNIGININQKTAEKYTPLHLAAMSKYPELVEILLDQGSNLEAKTITGATPLNLATFKGKSQAALILLKDEVNWREPDENGQMPIHGAAMNGLLDVAQAILYLDATVLDIEDKNLDTPLNLAAQNSHIDMVKYFIDLGAKVNTRNKKGQAPLLAFSKKGNLDMVKYLFDKNANVYIADNDGLNFFYYAVRNGHLNIVKYAMSEKDKFEWSTTDNNRSDGCSGECAISHFAVCDAVQYDKIEIVKYFVGTLGHYSICSPLHQAARYGHIHIVKYLVEEEVLSVDGSKPDTPLCYASENGHLAVVQYLIRNGAKVNHDCANGMTAIDKAITKNQLQVVQILAENGVDFRRKNRLDATPFLTAVASNSYEIAEYLIREKRQNININEQNGNKETALHLAVYYKNLQMIKLLVKYGIDENIRNGYDKTALDIARDNKISSIVEYLQTKSGKFRREYKSSNGEHDLLHENRISNFTDSKNLEYQHQHFINADNDASQSFSNTAANQNIDVIGTLLLIDVLIRRFSKQGYINNKPDSASDGIAQAAALAITEKFEDILNSLHNKSTEEQVDFAEVHRKIYAALRSGRNSQVHQVLCSSLKSISTLKPEDIKKLVSVVLSFQSSISLPEVSASAREVYGETLHLFHES.

The helix H8 is the probable transmembrane region of the tetrameric pore inserted in the target cell membrane stretch occupies residues 217–236 (VLYAILYGTQTYVSVMFFLL). C392 and C1044 form a disulfide bridge. ANK repeat units lie at residues 469-500 (QGRTVFHAAAKSGNDKIMIELTFFSKYTDINQ), 504-533 (KGYTPIHVAADSGNAGIVNLLIRSGISVNS), 538-568 (FLQTPLHLAAQRGFVATFQRLMESPEININE), 572-601 (DGFTPLHYAVRGGERILEAFINQAGIDVNV), 605-635 (KGLTPFHLAVIKNDWPVASTLLRSKKIDINA), 639-669 (NNMTALHYAAILGFLETTKQLINLKEINANA), 674-704 (GLLSALHYAILYKHDDVALFLLKSSKVNYNL), 708-737 (GDITPLHLAVMQGRKQVLSEMFNIGININQ), 741-770 (EKYTPLHLAAMSKYPELVEILLDQGSNLEA), 774-803 (TGATPLNLATFKGKSQAALILLKDEVNWRE), 807-837 (NGQMPIHGAAMNGLLDVAQAILYLDATVLDI), 841-870 (NLDTPLNLAAQNSHIDMVKYFIDLGAKVNT), 874-903 (KGQAPLLAFSKKGNLDMVKYLFDKNANVYI), 907-936 (DGLNFFYYAVRNGHLNIVKYAMSEKDKFEW), 953-981 (ISHFAVCDAVQYDKIEIVKYFVGTLGHYS), 982-1011 (ICSPLHQAARYGHIHIVKYLVEEEVLSVDG), 1013-1042 (KPDTPLCYASENGHLAVVQYLIRNGAKVNH), 1046-1075 (NGMTAIDKAITKNQLQVVQILAENGVDFRR), 1079-1109 (LDATPFLTAVASNSYEIAEYLIREKRQNINI), and 1115-1144 (NKETALHLAVYYKNLQMIKLLVKYGIDENI). Positions 1174–1177 (KFRR) are furin-like endopeptidase recognition region. Residues 1178–1368 (EYKSSNGEHD…GETLHLFHES (191 aa)) constitute a propeptide that is removed on maturation.

The protein belongs to the cationic peptide 01 (latrotoxin) family. 03 (alpha-latrotoxin) subfamily. Homotetramer in membranes. In terms of tissue distribution, expressed in venom gland, cephalothorax, and abdomen tissues from both males and females.

The protein resides in the secreted. Its subcellular location is the target cell membrane. Its function is as follows. Presynaptic neurotoxin that causes massive release of neurotransmitters from vertebrate (but not invertebrate) nerve terminals and endocrine cells via a complex mechanism involving activation of receptor(s) and toxin insertion into the plasma membrane with subsequent pore formation. Binds to neurexin-1-alpha (NRXN1) in a calcium dependent manner, adhesion G protein-coupled receptor L1 (ADGRL1, also termed latrophilin-1 and calcium-independent receptor of latrotoxin (CIRL)), and receptor-type tyrosine-protein phosphatase S (PTPRS), also termed PTP sigma. NRXN1 and PTPRS are suggested to provide a platform for binding and subsequent pore formation events. In contrast, binding to ADGRL1 does not involve oligomerization and channel formation, but direct downstream stimulation of the synaptic fusion machinery. The chain is Alpha-latrotoxin-Lg1a from Latrodectus geometricus (Brown widow spider).